Here is a 780-residue protein sequence, read N- to C-terminus: Lethal(3)malignant brain tumor-like protein 3 (780 aa).

Residues 1 to 64 form an interaction with RBPJ. Required for transcription repressor activity on Notch target genes region; it reads MTESASSTSG…VKKATATTTW (64 aa). Positions 149-220 are disordered; the sequence is DKDQKEERDV…RKRRGDSAVL (72 aa). Acidic residues-rich tracts occupy residues 157–166 and 185–194; these read DVEEDNEEED and EDGEERDDEM. MBT repeat units lie at residues 232-332, 340-439, and 448-543; these read WCWA…LHPP, FNWQ…LITP, and FSWD…LQPP. The CCHHC-type; degenerate zinc finger occupies 549-593; it reads LMEASEHGGCSTPGCKGIGHFKRARHLGPHSAANCPYSEINLNKD. A disordered region spans residues 597-665; the sequence is PDRLSGEMPP…GAREEPTVQQ (69 aa). Residues 600 to 710 form an interaction with DCAF5 region; sequence LSGEMPPASP…PASKVSKWST (111 aa). The residue at position 608 (serine 608) is a Phosphoserine. A Glycyl lysine isopeptide (Lys-Gly) (interchain with G-Cter in SUMO2) cross-link involves residue lysine 637. Residues 643–661 are compositionally biased toward basic and acidic residues; sequence RTESEMRTSHEARGAREEP. A Glycyl lysine isopeptide (Lys-Gly) (interchain with G-Cter in SUMO2) cross-link involves residue lysine 704. In terms of domain architecture, SAM spans 708–772; the sequence is WSTDEVSEFI…FNSILMFKAA (65 aa).

In terms of assembly, interacts with RNF2. Interacts (via SAM domain) with SAMD1 (via SAM domain); the interaction mediates L3MBTL3 binding to chromatin. Interacts with RBPJ; the interaction is required for L3MBTL3 localization to chromatin and is impaired by Notch-derived peptides containing the intracellular domain (NICD). Interacts (via SAM domain) with KDM1A. Interacts with DCAF5. Interacts with DNMT1. Interacts with E2F1. Interacts with SOX2. Interacts with SFMBT1.

It localises to the nucleus. Is a negative regulator of Notch target genes expression, required for RBPJ-mediated transcriptional repression. It recruits KDM1A to Notch-responsive elements and promotes KDM1A-mediated H3K4me demethylation. Involved in the regulation of ubiquitin-dependent degradation of a set of methylated non-histone proteins, including SOX2, DNMT1 and E2F1. It acts as an adapter recruiting the CRL4-DCAF5 E3 ubiquitin ligase complex to methylated target proteins. Required for normal maturation of myeloid progenitor cells. The protein is Lethal(3)malignant brain tumor-like protein 3 of Homo sapiens (Human).